We begin with the raw amino-acid sequence, 740 residues long: Arf-GAP with coiled-coil, ANK repeat and PH domain-containing protein 1 (740 aa).

The 226-residue stretch at 1–226 (MTVKLDFEEC…RKELGAQLHQ (226 aa)) folds into the BAR domain. The interval 1–382 (MTVKLDFEEC…RGPGQGSGHL (382 aa)) is required for formation of endosomal tubules when overexpressed with PIP5K1C. Residues 265–360 (GLVMEGHLFK…WVSAVQSSIA (96 aa)) form the PH domain. The 123-residue stretch at 405 to 527 (GHVVAQVQSV…KFLTKLPEIR (123 aa)) folds into the Arf-GAP domain. Residues 405 to 740 (GHVVAQVQSV…SRRSHDLHTL (336 aa)) form a required for interaction with GULP1 region. The C4-type zinc finger occupies 420 to 443 (CCDCREPAPEWASINLGVTLCIQC). Y485 bears the 3'-nitrotyrosine mark. The prevents interaction with ITGB1 when S-554 is not phosphorylated stretch occupies residues 525–566 (EIRGRRGGRGRPRGQPPVPPKPSIRPRPGSLRSKPEPPSEDL). The segment at 525–581 (EIRGRRGGRGRPRGQPPVPPKPSIRPRPGSLRSKPEPPSEDLGSLHPGALLFRASGH) is disordered. Residues 538–549 (GQPPVPPKPSIR) show a composition bias toward pro residues. A Phosphoserine; by PKB modification is found at S554. ANK repeat units follow at residues 606 to 635 (DNATPLIQATAANSLLACEFLLQNGANVNQ), 639 to 668 (AGRGPLHHATILGHTGLACLFLKRGADLGA), and 672 to 702 (EGRDPLTIAMETANADIVTLLRLAKMREAEA).

As to quaternary structure, banana-shaped homodimer laterally assembling into tetramers, the tetramers further pack helically onto the membrane. Interacts with GTP-bound ARF6. Interacts with third cytoplasmic loop of SLC2A4/GLUT4. Interacts with CLTC. Interacts with GULP1. Forms a complex with GDP-bound ARF6 and GULP1. Interacts with ITGB1; required for ITGB1 recycling. Phosphorylation at Ser-554 by PKB is required for interaction with ITGB1, export of ITGB1 from recycling endosomes to the cell surface and ITGB1-dependent cell migration. As to expression, highest level in lung and spleen. Low level in heart, kidney, liver and pancreas.

It localises to the recycling endosome membrane. With respect to regulation, GAP activity stimulated by phosphatidylinositol 4,5-bisphosphate (PIP2) and phosphatidic acid. Its function is as follows. GTPase-activating protein (GAP) for ADP ribosylation factor 6 (ARF6) required for clathrin-dependent export of proteins from recycling endosomes to trans-Golgi network and cell surface. Required for regulated export of ITGB1 from recycling endosomes to the cell surface and ITGB1-dependent cell migration. This chain is Arf-GAP with coiled-coil, ANK repeat and PH domain-containing protein 1 (ACAP1), found in Homo sapiens (Human).